Reading from the N-terminus, the 81-residue chain is Fungal defensin micasin (81 aa).

Positions 1-21 (MQFTKLATILLVSLMGSAAIA) are cleaved as a signal peptide. The propeptide occupies 22–43 (APATNNAAVDAAADATPAVEKR). 3 disulfides stabilise this stretch: Cys-47-Cys-68, Cys-54-Cys-76, and Cys-58-Cys-78.

It belongs to the invertebrate defensin family.

It is found in the secreted. Functionally, antibacterial peptide with potent activity against both Gram-positive and Gram-negative bacteria. May kill bacteria via an intracellular action mode to affect protein folding. Does not show effects on tested filamentous fungi or on the yeast S.cerevisiae. Does not act by destroying the membrane integrity, which is consistent with its nonamphiphilic architecture. Acts more rapidly than vancomycin, suggesting it does not act by inhibiting cell-wall biosynthesis. Does not cause hemolysis and has no cytotoxic effect on HEK cells. In vivo, is as efficient as vancomycin to protect mouse peritonitis models from S.aureus and P.aeruginosa infections. This is Fungal defensin micasin from Arthroderma otae (Microsporum canis).